Here is a 457-residue protein sequence, read N- to C-terminus: Cysteine--tRNA ligase (457 aa).

Residue C28 participates in Zn(2+) binding. The short motif at 30 to 40 (PTVYDTAHIGN) is the 'HIGH' region element. 3 residues coordinate Zn(2+): C212, H237, and E241. Residues 270-274 (KMSKS) carry the 'KMSKS' region motif. Residue K273 coordinates ATP.

Belongs to the class-I aminoacyl-tRNA synthetase family. In terms of assembly, monomer. Requires Zn(2+) as cofactor.

The protein localises to the cytoplasm. It carries out the reaction tRNA(Cys) + L-cysteine + ATP = L-cysteinyl-tRNA(Cys) + AMP + diphosphate. This chain is Cysteine--tRNA ligase, found in Wolbachia pipientis wMel.